The sequence spans 286 residues: Protein WVD2-like 1 (286 aa).

The tract at residues 31 to 101 (ETDEEFEVKE…ENKKHIDDED (71 aa)) is disordered. T32 is modified (phosphothreonine). Positions 38-47 (VKECTEEKSL) are enriched in basic and acidic residues. A coiled-coil region spans residues 131–182 (AQRAEKRKEYYQKLEEKNQALEAERNELEQRQKDEQEAALKQLRKNLKFKAK). The segment at 186–286 (NFYYEAPPAK…KPVNESSEEA (101 aa)) is disordered. The segment covering 234-247 (TVSNRNRHSTGTVQ) has biased composition (polar residues).

This sequence belongs to the TPX2 family.

It localises to the cytoplasm. The protein localises to the cytoskeleton. In terms of biological role, microtubule-associated protein (MAP) that regulates the orientation of interphase cortical microtubules. Modulates both rotational polarity and anisotropic cell expansion during organ growth. Promotes clockwise root and etiolated hypocotyls coiling, clockwise leaf curling, but left-handed petiole twisting. In Arabidopsis thaliana (Mouse-ear cress), this protein is Protein WVD2-like 1 (WDL1).